The primary structure comprises 336 residues: MSFFGFGQSVEVEILLNDAESRKRAEHKTEDGKKEKYFLFYDGETVSGKVSLSLKNPNKRLEHQGIKIEFIGQIELYYDRGNHHEFVSLVKDLARPGEITQSQAFDFEFTHVEKPYESYTGQNVKLRYFLRATISRRLNDVVKEMDIVVHTLSTYPELNSSIKMEVGIEDCLHIEFEYNKSKYHLKDVIVGKIYFLLVRIKIKHMEIDIIKRETTGTGPNVYHENDTIAKYEIMDGAPVRGESIPIRLFLAGYELTPTMRDINKKFSVRYYLNLVLIDEEERRYFKQQEVVLWRKGDIVRKSMSHQAAIASQRFEGTTSLGEVRTPGQLSDNNSRQ.

Phosphoserine is present on residues Ser-302, Ser-304, and Ser-319.

It belongs to the VPS26 family. In terms of assembly, component of the heterotrimeric retromer cargo-selective complex (CSC), also described as vacuolar protein sorting subcomplex (VPS), formed by VPS26 (VPS26A or VPS26B), VPS29 and VPS35. The CSC has a highly elongated structure with VPS26 and VPS29 binding independently at opposite distal ends of VPS35 as central platform. The CSC is believed to associate with variable sorting nexins to form functionally distinct retromer complex variants. The originally described SNX-BAR retromer is a pentamer containing the CSC and a heterodimeric membrane-deforming subcomplex formed between SNX1 or SNX2 and SNX5 or SNX6 (also called SNX-BAR subcomplex); the respective CSC and SNX-BAR subcomplexes associate with low affinity. The CSC associates with SNX3 to form a SNX3-retromer complex. The CSC associates with SNX27, the WASH complex and the SNX-BAR subcomplex to form the SNX27-retromer complex. Interacts with VPS29, VPS35, TBC1D5, GOLPH3, SNX27. As to expression, ubiquitously expressed in developing embryo and adult. Highly expressed in brain.

The protein resides in the cytoplasm. The protein localises to the membrane. It is found in the early endosome. Its subcellular location is the late endosome. Acts as a component of the retromer cargo-selective complex (CSC). The CSC is believed to be the core functional component of retromer or respective retromer complex variants acting to prevent missorting of selected transmembrane cargo proteins into the lysosomal degradation pathway. The recruitment of the CSC to the endosomal membrane involves RAB7A and SNX3. The SNX-BAR retromer mediates retrograde transport of cargo proteins from endosomes to the trans-Golgi network (TGN) and is involved in endosome-to-plasma membrane transport for cargo protein recycling. The SNX3-retromer mediates the retrograde transport of WLS distinct from the SNX-BAR retromer pathway. The SNX27-retromer is believed to be involved in endosome-to-plasma membrane trafficking and recycling of a broad spectrum of cargo proteins. The CSC seems to act as recruitment hub for other proteins, such as the WASH complex and TBC1D5. May be involved in retrograde transport of SORT1 but not of IGF2R. Acts redundantly with VSP26A in SNX-27 mediated endocytic recycling of SLC2A1/GLUT1. This is Vacuolar protein sorting-associated protein 26B (Vps26b) from Mus musculus (Mouse).